The primary structure comprises 168 residues: Large ribosomal subunit protein bL17 (168 aa).

A compositionally biased stretch (basic and acidic residues) spans A121–A146. The interval A121–E168 is disordered. Basic residues predominate over residues K148–K158. Basic and acidic residues predominate over residues A159 to E168.

The protein belongs to the bacterial ribosomal protein bL17 family. Part of the 50S ribosomal subunit. Contacts protein L32.

In Anaeromyxobacter sp. (strain Fw109-5), this protein is Large ribosomal subunit protein bL17.